The primary structure comprises 488 residues: MSQSVESRTRIKSERYESGVIPYAKMGYWDADYVIKETDVLALFRITPQPGVDPIEASAAIAGESSTATWTVVWTDLLTACDLYRAKAYRVDPVPNVADQYFAYIAYDIDLFEEGSIANLTASIIGNVFGFKAVKALRLEDMRMPVAYLKTFQGPATGLIVERERMDKFGRPFLGATVKPKLGLSGKNYGRVVYEGLKGGLDFLKDDENINSQPFMRWKERFLYSMEGVNKASAAAGEIKGHYLNVTAATMEDMYERAEFSKEVGSIICMIDLVIGYTAIQTMAIWARKHDMILHLHRAGNSTYSRQKNHGMNFRVICKWMRMAGVDHIHAGTVVGKLEGDPLMIKGFYNTLLESETDINLPQGLFFAQNWASLRKVVPVASGGIHAGQMHQLLDYLGDDVVLQFGGGTIGHPDGIQAGATANRVALESMVMARNEGRNYVAEGPQILRDAAKTCGPLQTALDLWKDISFNYTSTDTADFVETPTANI.

Residues N127 and T177 each contribute to the substrate site. Residue K179 is the Proton acceptor of the active site. K181 is a binding site for substrate. Positions 205, 207, and 208 each coordinate Mg(2+). At K205 the chain carries N6-carboxylysine. H297 acts as the Proton acceptor in catalysis. Positions 298, 330, and 382 each coordinate substrate.

The protein belongs to the RuBisCO large chain family. Type I subfamily. Heterohexadecamer of 8 large chains and 8 small chains. Requires Mg(2+) as cofactor.

The protein resides in the plastid. The protein localises to the chloroplast. The enzyme catalyses 2 (2R)-3-phosphoglycerate + 2 H(+) = D-ribulose 1,5-bisphosphate + CO2 + H2O. It catalyses the reaction D-ribulose 1,5-bisphosphate + O2 = 2-phosphoglycolate + (2R)-3-phosphoglycerate + 2 H(+). RuBisCO catalyzes two reactions: the carboxylation of D-ribulose 1,5-bisphosphate, the primary event in carbon dioxide fixation, as well as the oxidative fragmentation of the pentose substrate in the photorespiration process. Both reactions occur simultaneously and in competition at the same active site. The chain is Ribulose bisphosphate carboxylase large chain (rbcL) from Pyropia haitanensis (Red seaweed).